Reading from the N-terminus, the 344-residue chain is Probable electron transfer flavoprotein subunit alpha, mitochondrial (344 aa).

Residue 284-312 participates in FAD binding; sequence LYIAIGVSGAVQHLAGMKDSKVIVAINND.

This sequence belongs to the ETF alpha-subunit/FixB family. Heterodimer of an alpha and a beta subunit. FAD serves as cofactor.

The protein localises to the mitochondrion matrix. Functionally, the electron transfer flavoprotein serves as a specific electron acceptor for several dehydrogenases, including five acyl-CoA dehydrogenases, glutaryl-CoA and sarcosine dehydrogenase. It transfers the electrons to the main mitochondrial respiratory chain via ETF-ubiquinone oxidoreductase (ETF dehydrogenase). The chain is Probable electron transfer flavoprotein subunit alpha, mitochondrial (AIM45) from Saccharomyces cerevisiae (strain ATCC 204508 / S288c) (Baker's yeast).